We begin with the raw amino-acid sequence, 200 residues long: Peptidyl-tRNA hydrolase (200 aa).

Tyrosine 14 contacts tRNA. The active-site Proton acceptor is histidine 19. Phenylalanine 64, asparagine 66, and asparagine 112 together coordinate tRNA.

This sequence belongs to the PTH family. Monomer.

It is found in the cytoplasm. The enzyme catalyses an N-acyl-L-alpha-aminoacyl-tRNA + H2O = an N-acyl-L-amino acid + a tRNA + H(+). Hydrolyzes ribosome-free peptidyl-tRNAs (with 1 or more amino acids incorporated), which drop off the ribosome during protein synthesis, or as a result of ribosome stalling. In terms of biological role, catalyzes the release of premature peptidyl moieties from peptidyl-tRNA molecules trapped in stalled 50S ribosomal subunits, and thus maintains levels of free tRNAs and 50S ribosomes. The polypeptide is Peptidyl-tRNA hydrolase (Maricaulis maris (strain MCS10) (Caulobacter maris)).